Consider the following 86-residue polypeptide: MARVTVEDCLHAVDNRFELVLVASKRAHQLAKGVSEPLVEVNNDKPTVLALREIAAGLVTKDILNQPDHHFATNSLDLALSGGQGF.

This sequence belongs to the RNA polymerase subunit omega family. The RNAP catalytic core consists of 2 alpha, 1 beta, 1 beta' and 1 omega subunit. When a sigma factor is associated with the core the holoenzyme is formed, which can initiate transcription.

It carries out the reaction RNA(n) + a ribonucleoside 5'-triphosphate = RNA(n+1) + diphosphate. Promotes RNA polymerase assembly. Latches the N- and C-terminal regions of the beta' subunit thereby facilitating its interaction with the beta and alpha subunits. This is DNA-directed RNA polymerase subunit omega from Psychrobacter sp. (strain PRwf-1).